The chain runs to 174 residues: Shikimate kinase 2 (174 aa).

12 to 17 (GCGKTT) is an ATP binding site. 2 residues coordinate Mg(2+): Thr-16 and Asp-32. Substrate-binding residues include Asp-34, Arg-58, and Gly-79. Positions 112-126 (QAAPEEDLRPTLTGK) are LID domain. Arg-120 is a binding site for ATP. Arg-139 provides a ligand contact to substrate.

The protein belongs to the shikimate kinase family. AroL subfamily. As to quaternary structure, monomer. Requires Mg(2+) as cofactor.

The protein resides in the cytoplasm. It catalyses the reaction shikimate + ATP = 3-phosphoshikimate + ADP + H(+). It functions in the pathway metabolic intermediate biosynthesis; chorismate biosynthesis; chorismate from D-erythrose 4-phosphate and phosphoenolpyruvate: step 5/7. Functionally, catalyzes the specific phosphorylation of the 3-hydroxyl group of shikimic acid using ATP as a cosubstrate. The protein is Shikimate kinase 2 of Shigella boydii serotype 18 (strain CDC 3083-94 / BS512).